The primary structure comprises 734 residues: Monosaccharide-sensing protein 1 (734 aa).

A run of 6 helical transmembrane segments spans residues 6-26 (LVAL…ATIA), 44-64 (GLVV…SGPI), 79-99 (VMYF…VLCF), 102-122 (LLNG…ISET), 133-153 (TLPQ…VFTM), and 163-183 (AMLG…VFYL). The segment at 351–403 (YNKDNDDYATDDGAGDDDDSDNDLRSPLMSRQTTSMDKDMIPHPTSGSTLSMR) is disordered. Acidic residues predominate over residues 357 to 371 (DYATDDGAGDDDDSD). 2 positions are modified to phosphoserine: S446 and S480. Transmembrane regions (helical) follow at residues 510–530 (ALVV…NGVL), 556–576 (ASFL…VVAM), 588–608 (LLWT…SELI), 621–641 (GCVV…PNIL), 653–673 (LCIA…TYSL), and 680–700 (IGLV…WIFV).

This sequence belongs to the major facilitator superfamily. Sugar transporter (TC 2.A.1.1) family. Binds to VIK at the tonoplast. Post-translationally, phosphorylated by VIK; this activation promotes carrier activity. In terms of tissue distribution, mostly expressed in juvenile and adult leaves, to a lower extent, in flower tissues, and, at low levels, in roots and stems.

The protein localises to the vacuole membrane. The enzyme catalyses D-glucose(out) + H(+)(in) = D-glucose(in) + H(+)(out). It carries out the reaction sucrose(out) + H(+)(in) = sucrose(in) + H(+)(out). Enhanced activation by VIK-mediated phosphorylation promoting carrier activity and consequently vacuolar sugar accumulation. In terms of biological role, sugar proton-coupled antiporter which contributes to vacuolar sugar import (e.g. monosaccharides including glucose, sucrose and fructose), particularly during stress responses (e.g. in response to cold). Required for cytosolic glucose homeostasis. In Arabidopsis thaliana (Mouse-ear cress), this protein is Monosaccharide-sensing protein 1.